Reading from the N-terminus, the 530-residue chain is Autoinducer-2 kinase (530 aa).

The protein belongs to the FGGY kinase family.

The protein resides in the cytoplasm. The catalysed reaction is (S)-4,5-dihydroxypentane-2,3-dione + ATP = (2S)-2-hydroxy-3,4-dioxopentyl phosphate + ADP + H(+). Functionally, catalyzes the phosphorylation of autoinducer-2 (AI-2) to phospho-AI-2, which subsequently inactivates the transcriptional regulator LsrR and leads to the transcription of the lsr operon. Phosphorylates the ring-open form of (S)-4,5-dihydroxypentane-2,3-dione (DPD), which is the precursor to all AI-2 signaling molecules, at the C5 position. The sequence is that of Autoinducer-2 kinase from Escherichia coli (strain K12 / DH10B).